A 403-amino-acid chain; its full sequence is D-alanyl-D-alanine carboxypeptidase DacA (403 aa).

Positions 1-29 (MNTIFSARIMKRLALTTALCTAFISAAHA) are cleaved as a signal peptide. The active-site Acyl-ester intermediate is Ser73. The Proton acceptor role is filled by Lys76. Residue Ser139 is part of the active site. Lys242 provides a ligand contact to substrate.

Belongs to the peptidase S11 family.

It is found in the cell inner membrane. It carries out the reaction Preferential cleavage: (Ac)2-L-Lys-D-Ala-|-D-Ala. Also transpeptidation of peptidyl-alanyl moieties that are N-acyl substituents of D-alanine.. It functions in the pathway cell wall biogenesis; peptidoglycan biosynthesis. Its function is as follows. Removes C-terminal D-alanyl residues from sugar-peptide cell wall precursors. This Escherichia coli O157:H7 protein is D-alanyl-D-alanine carboxypeptidase DacA (dacA).